The sequence spans 419 residues: Pyrrolysine--tRNA ligase (419 aa).

Positions 100–157 are disordered; the sequence is APKVKKAMPKSVSRAPKPLENSVSAKASTNTSRSVPSPAKSTPNSSVPASAPAPSLTR. Polar residues predominate over residues 120 to 141; sequence NSVSAKASTNTSRSVPSPAKST. Low complexity predominate over residues 142–154; sequence PNSSVPASAPAPS.

It belongs to the class-II aminoacyl-tRNA synthetase family.

The protein resides in the cytoplasm. The catalysed reaction is tRNA(Pyl) + L-pyrrolysine + ATP = L-pyrrolysyl-tRNA(Pyl) + AMP + diphosphate. Functionally, catalyzes the attachment of pyrrolysine to tRNA(Pyl). Pyrrolysine is a lysine derivative encoded by the termination codon UAG. In Methanosarcina barkeri, this protein is Pyrrolysine--tRNA ligase (pylS).